The chain runs to 557 residues: 2-succinyl-5-enolpyruvyl-6-hydroxy-3-cyclohexene-1-carboxylate synthase (557 aa).

Positions 183–206 are disordered; it reads YGGTEHPPVAPPLPPRRAPRAAAP.

This sequence belongs to the TPP enzyme family. MenD subfamily. As to quaternary structure, homodimer. Mg(2+) serves as cofactor. The cofactor is Mn(2+). It depends on thiamine diphosphate as a cofactor.

The catalysed reaction is isochorismate + 2-oxoglutarate + H(+) = 5-enolpyruvoyl-6-hydroxy-2-succinyl-cyclohex-3-ene-1-carboxylate + CO2. Its pathway is quinol/quinone metabolism; 1,4-dihydroxy-2-naphthoate biosynthesis; 1,4-dihydroxy-2-naphthoate from chorismate: step 2/7. It participates in quinol/quinone metabolism; menaquinone biosynthesis. Functionally, catalyzes the thiamine diphosphate-dependent decarboxylation of 2-oxoglutarate and the subsequent addition of the resulting succinic semialdehyde-thiamine pyrophosphate anion to isochorismate to yield 2-succinyl-5-enolpyruvyl-6-hydroxy-3-cyclohexene-1-carboxylate (SEPHCHC). The protein is 2-succinyl-5-enolpyruvyl-6-hydroxy-3-cyclohexene-1-carboxylate synthase of Halorhodospira halophila (strain DSM 244 / SL1) (Ectothiorhodospira halophila (strain DSM 244 / SL1)).